The chain runs to 68 residues: Glucagon-1 (68 aa).

This sequence belongs to the glucagon family.

The protein resides in the secreted. Its function is as follows. Promotes hydrolysis of glycogen and lipids, and raises the blood sugar level. This chain is Glucagon-1 (gcg), found in Oncorhynchus kisutch (Coho salmon).